A 79-amino-acid polypeptide reads, in one-letter code: Putative membrane protein insertion efficiency factor (79 aa).

It belongs to the UPF0161 family.

The protein localises to the cell inner membrane. In terms of biological role, could be involved in insertion of integral membrane proteins into the membrane. In Cytophaga hutchinsonii (strain ATCC 33406 / DSM 1761 / CIP 103989 / NBRC 15051 / NCIMB 9469 / D465), this protein is Putative membrane protein insertion efficiency factor.